The primary structure comprises 883 residues: MSQQTTIRKLAELVNTPVEKLLEQLAGAGMKFSGPDQVVTSSEKVKLLGFLRRSHGKPEQAPEETDQSAKKITLNRRKQQEVTVNSGRSKTTVNVEVRQKRTYVKDGARAMTPDEERADILRKLEESRARNLAEQQALAEKDRLRDEAIVRAREEEVAAKERAEAEKKAAEEAAAAAKAAEALAASKPKVRAPIDETAPRPPRAPAAAPAAPRGAPPPPPRSDDRNNRSAPRNERGPGDRFAGQMHLSAADRARRGNSNNSNNRGRPGGRNQSGGRRDMSRGGNNAGPHAFERPTAPVVREVAIGETITVADLAQKLALKGGEVVKALFKMGVMATITQSIDHDTAALVTEELGHKAIRANDNDAEDALLASAGENQGEAVQRPPVVTIMGHVDHGKTSLLDYIRRTKVATGEAGGITQHIGAYHVDTPKGVISFLDTPGHAAFTSMRARGAKLTDIVVLVVAADDGVMPQTKEAIQHARSAGVPLIVAINKIDKSGADPMRVKNELLSEQVVAEDFGGDIQMVEISAKTGLGIDDLLDAVSVQAELLELKAVDEGRANGVVIESSLDKGRGPVATVLVQQGRLKKGDYLVCGIQYGRVRALFDETGKQPEFAGPSIPVQVLGLSGVPEAGDDFVVVDDERLAKDVAQQRETKRRESRLVATAGSRMEDIMATLGKGEGQQVLNLVIKADVQGSVQALSQALVALSNEDIRINVIHSGVGGITESDANSAAASKATVIGFNVRADASARRIIESNGVDLRYFSIIYDVIDQVKQVASGLLGVEIREEIIGIAEVRDVFRSSKLGAVAGSMVIEGVVKRNKPIRVLRDSVVIFEGELESLRRFKENVEEVRNGTECGIAVKAYNDVKPGDQIECFERIEVPRTL.

Disordered regions lie at residues 53–90 and 171–294; these read RSHG…GRSK and EEAA…FERP. Over residues 81-90 the composition is skewed to polar residues; it reads EVTVNSGRSK. Low complexity predominate over residues 172-185; it reads EAAAAAKAAEALAA. Basic and acidic residues predominate over residues 221–238; the sequence is RSDDRNNRSAPRNERGPG. Positions 256 to 265 are enriched in low complexity; that stretch reads GNSNNSNNRG. The tr-type G domain occupies 382–551; it reads QRPPVVTIMG…SVQAELLELK (170 aa). Residues 391-398 are G1; the sequence is GHVDHGKT. 391–398 provides a ligand contact to GTP; it reads GHVDHGKT. The G2 stretch occupies residues 416–420; sequence GITQH. The tract at residues 437–440 is G3; sequence DTPG. Residues 437 to 441 and 491 to 494 contribute to the GTP site; these read DTPGH and NKID. Residues 491-494 are G4; sequence NKID. A G5 region spans residues 527 to 529; that stretch reads SAK.

The protein belongs to the TRAFAC class translation factor GTPase superfamily. Classic translation factor GTPase family. IF-2 subfamily.

It is found in the cytoplasm. Functionally, one of the essential components for the initiation of protein synthesis. Protects formylmethionyl-tRNA from spontaneous hydrolysis and promotes its binding to the 30S ribosomal subunits. Also involved in the hydrolysis of GTP during the formation of the 70S ribosomal complex. The chain is Translation initiation factor IF-2 from Stenotrophomonas maltophilia (strain R551-3).